A 403-amino-acid chain; its full sequence is Neuromedin U receptor homolog nmur-2 (403 aa).

Residues 1–27 (MSQCTVEYNVSEITEYVLSTLGERCQS) are Extracellular-facing. Residues 28 to 48 (AGIVIPTVIIYGTIFLLGLFG) form a helical membrane-spanning segment. At 49 to 68 (NICTCIVIAANKSMHNPTNY) the chain is on the cytoplasmic side. Residues 69–89 (YLFSLAVSDIIALILGLPMEF) form a helical membrane-spanning segment. At 90-109 (YQSLDYSYPYRFSEGICKAR) the chain is on the extracellular side. The chain crosses the membrane as a helical span at residues 110–130 (AFLIEFTSYASIMIICCFSFE). At 131-151 (RWLAICHPLRSKIFSTLWRAN) the chain is on the cytoplasmic side. Residues 152–172 (VLIILAWTISFVCALPIAFIV) form a helical membrane-spanning segment. At 173–216 (QINKLPLPEDAKYQPWTNKVSTDGIFVLHTEFCAMNQSRPDQQK) the chain is on the extracellular side. Residues 217–237 (MIIIFAFTVFFVIPAIAIVIM) form a helical membrane-spanning segment. The Cytoplasmic portion of the chain corresponds to 238-268 (YAHIAVQLESSEIDLKGDKMVKKRRNKSNRT). Residues 269–289 (VLKMLLSVVITFFICWLPFHI) form a helical membrane-spanning segment. At 290 to 304 (QRLLSVYTTWSETTT) the chain is on the extracellular side. Residues 305–325 (ISPPVQFLSMIVFYISGFCYY) traverse the membrane as a helical segment. At 326–403 (SNSAANPILY…PHRKLEVHNY (78 aa)) the chain is on the cytoplasmic side.

This sequence belongs to the G-protein coupled receptor 1 family.

The protein localises to the membrane. Its function is as follows. Putative G protein-coupled receptor for pyrokinin-like neuropeptide derived from the processing of the neuropeptide precursor capa-1. This chain is Neuromedin U receptor homolog nmur-2, found in Caenorhabditis elegans.